The sequence spans 529 residues: Bifunctional purine biosynthesis protein PurH (529 aa).

Residues 8–158 (PSAPDLVAPK…KNHGYVAVCT (151 aa)) enclose the MGS-like domain.

It belongs to the PurH family.

The catalysed reaction is (6R)-10-formyltetrahydrofolate + 5-amino-1-(5-phospho-beta-D-ribosyl)imidazole-4-carboxamide = 5-formamido-1-(5-phospho-D-ribosyl)imidazole-4-carboxamide + (6S)-5,6,7,8-tetrahydrofolate. It catalyses the reaction IMP + H2O = 5-formamido-1-(5-phospho-D-ribosyl)imidazole-4-carboxamide. It participates in purine metabolism; IMP biosynthesis via de novo pathway; 5-formamido-1-(5-phospho-D-ribosyl)imidazole-4-carboxamide from 5-amino-1-(5-phospho-D-ribosyl)imidazole-4-carboxamide (10-formyl THF route): step 1/1. The protein operates within purine metabolism; IMP biosynthesis via de novo pathway; IMP from 5-formamido-1-(5-phospho-D-ribosyl)imidazole-4-carboxamide: step 1/1. The sequence is that of Bifunctional purine biosynthesis protein PurH from Caulobacter vibrioides (strain ATCC 19089 / CIP 103742 / CB 15) (Caulobacter crescentus).